Reading from the N-terminus, the 376-residue chain is Phosphoserine aminotransferase (376 aa).

Arginine 54 lines the L-glutamate pocket. Residues 88 to 89 (AT), tryptophan 115, threonine 165, aspartate 186, and glutamine 209 each bind pyridoxal 5'-phosphate. The residue at position 210 (lysine 210) is an N6-(pyridoxal phosphate)lysine. Residue 251–252 (NT) coordinates pyridoxal 5'-phosphate.

This sequence belongs to the class-V pyridoxal-phosphate-dependent aminotransferase family. SerC subfamily. As to quaternary structure, homodimer. The cofactor is pyridoxal 5'-phosphate.

It is found in the cytoplasm. It catalyses the reaction O-phospho-L-serine + 2-oxoglutarate = 3-phosphooxypyruvate + L-glutamate. The catalysed reaction is 4-(phosphooxy)-L-threonine + 2-oxoglutarate = (R)-3-hydroxy-2-oxo-4-phosphooxybutanoate + L-glutamate. The protein operates within amino-acid biosynthesis; L-serine biosynthesis; L-serine from 3-phospho-D-glycerate: step 2/3. Its pathway is cofactor biosynthesis; pyridoxine 5'-phosphate biosynthesis; pyridoxine 5'-phosphate from D-erythrose 4-phosphate: step 3/5. Catalyzes the reversible conversion of 3-phosphohydroxypyruvate to phosphoserine and of 3-hydroxy-2-oxo-4-phosphonooxybutanoate to phosphohydroxythreonine. This Rhodopirellula baltica (strain DSM 10527 / NCIMB 13988 / SH1) protein is Phosphoserine aminotransferase.